Reading from the N-terminus, the 153-residue chain is 6,7-dimethyl-8-ribityllumazine synthase (153 aa).

5-amino-6-(D-ribitylamino)uracil-binding positions include Phe-22, 56 to 58 (AFE), and 80 to 82 (TVI). 85–86 (ST) contributes to the (2S)-2-hydroxy-3-oxobutyl phosphate binding site. Residue His-88 is the Proton donor of the active site. Residue Phe-113 participates in 5-amino-6-(D-ribitylamino)uracil binding. Arg-127 contributes to the (2S)-2-hydroxy-3-oxobutyl phosphate binding site.

The protein belongs to the DMRL synthase family. Forms an icosahedral capsid composed of 60 subunits, arranged as a dodecamer of pentamers.

The enzyme catalyses (2S)-2-hydroxy-3-oxobutyl phosphate + 5-amino-6-(D-ribitylamino)uracil = 6,7-dimethyl-8-(1-D-ribityl)lumazine + phosphate + 2 H2O + H(+). The protein operates within cofactor biosynthesis; riboflavin biosynthesis; riboflavin from 2-hydroxy-3-oxobutyl phosphate and 5-amino-6-(D-ribitylamino)uracil: step 1/2. Catalyzes the formation of 6,7-dimethyl-8-ribityllumazine by condensation of 5-amino-6-(D-ribitylamino)uracil with 3,4-dihydroxy-2-butanone 4-phosphate. This is the penultimate step in the biosynthesis of riboflavin. The protein is 6,7-dimethyl-8-ribityllumazine synthase of Glaesserella parasuis serovar 5 (strain SH0165) (Haemophilus parasuis).